The sequence spans 254 residues: MVIKLGGVLLDSEEALERLFTALVTYREKHERPLVIMHGGGCLVDDLMKKLALPVVKKNGLRVTPADQIDIITGALAGTANKTLLAWAVKHDINAVGLCLGDGNTVSVTPLDAALGHVGKAEAGSPALVQTLLAANYMPIISSIGITKDGSLMNVNADQAATALAATLGADLILLSDVSGILDGKGQRIAEMTAQKAEQLIAQGIITDGMVVKVNAALDAARSLGRPVDIASWRHADQLPALFNGVPIGTRILA.

Substrate is bound by residues 40–41, Arg-62, and Asn-154; that span reads GG. Residues 177 to 182 and 205 to 207 contribute to the ATP site; these read DVSGIL and IIT.

This sequence belongs to the acetylglutamate kinase family. ArgB subfamily. Homodimer.

It is found in the cytoplasm. It carries out the reaction N-acetyl-L-glutamate + ATP = N-acetyl-L-glutamyl 5-phosphate + ADP. The protein operates within amino-acid biosynthesis; L-arginine biosynthesis; N(2)-acetyl-L-ornithine from L-glutamate: step 2/4. Functionally, catalyzes the ATP-dependent phosphorylation of N-acetyl-L-glutamate. In Yersinia enterocolitica serotype O:8 / biotype 1B (strain NCTC 13174 / 8081), this protein is Acetylglutamate kinase.